A 715-amino-acid polypeptide reads, in one-letter code: MYLSIIILPLLGSIVAGFFGRKVGVSGAQLITCLSVIITTGLAILAFFEVGFNNIPVTINLFRWIDSEWYNILWGFQFDSLTVAMLIPVLIISSLVHIYSISYMSHDPHNQRFFSYLSLFTFMMIILVTANNYLLMFVGWEGVGVCSYLLVSFWFTRIAANQSSMSAFLTNRVGDCFLTIGMFVVLWTLGNLDYATVFSLAPYINSDIATIIGICLLIGAMAKSSQVGLHVWLPMAMEGPTPVSALIHAATMVTAGVYLLMRSSPLIEYSSTVLLLCLWLGAITTVFSSLIGLFQQDIKKVIAYSTMSQLGMMVIAIGLSSYNVALFHLINHAFYKALLFLGAGSVIHAVADNQDFRKFGGLKNYLPLTYSVMLIASLSLVAFPYMTGFYSKDFILESAYGQFSFSGVAVYIIATIGAIFTTLYSVKVLYLTFLANPNGYIHFYRHFILYERLYVYVSYTGKEEFYLPKHMSKEINNLPRSVSGEGGFFLSLPLVILALFSIFFGFITKDIFIGLGSNFFIDNSLFIHPIHEIMIDTEFAVPTLFKLLPFIFTISFSLIALVLSEKYPNLVVHFKLSRLGYNLFGFFNQRFLVELFYNKYITNLVLDLGGQITKILDKGSIELLGPFGLEKVLIKWSKDIASLSTSIVTNYALFILVGFILYVFTFISLLEGGLDLNLSLFILLLSLTSSTSSSDSKEGKMIKKAVVSTKNKNIR.

17 consecutive transmembrane segments (helical) span residues 1–21 (MYLS…FFGR), 30–50 (LITC…FFEV), 81–101 (LTVA…IYSI), 119–139 (LFTF…MFVG), 140–160 (WEGV…RIAA), 177–197 (FLTI…YATV), 200–220 (LAPY…LIGA), 241–261 (TPVS…YLLM), 274–294 (LLLC…IGLF), 310–330 (LGMM…FHLI), 331–351 (NHAF…HAVA), 366–386 (LPLT…FPYM), 403–423 (FSFS…FTTL), 487–507 (GFFL…FGFI), 543–563 (TLFK…ALVL), 647–667 (IVTN…FTFI), and 668–688 (SLLE…LSLT).

It belongs to the complex I subunit 5 family.

It is found in the mitochondrion inner membrane. It catalyses the reaction a ubiquinone + NADH + 5 H(+)(in) = a ubiquinol + NAD(+) + 4 H(+)(out). Core subunit of the mitochondrial membrane respiratory chain NADH dehydrogenase (Complex I) that is believed to belong to the minimal assembly required for catalysis. Complex I functions in the transfer of electrons from NADH to the respiratory chain. The immediate electron acceptor for the enzyme is believed to be ubiquinone. The polypeptide is NADH-ubiquinone oxidoreductase chain 5 (ndh-5) (Neurospora crassa (strain ATCC 24698 / 74-OR23-1A / CBS 708.71 / DSM 1257 / FGSC 987)).